A 240-amino-acid chain; its full sequence is Putative tyrosine phosphatase 067L (240 aa).

The Tyrosine-protein phosphatase domain occupies Q3 to Q151. The Phosphocysteine intermediate role is filled by C96.

The protein belongs to the protein-tyrosine phosphatase family.

It carries out the reaction O-phospho-L-tyrosyl-[protein] + H2O = L-tyrosyl-[protein] + phosphate. The polypeptide is Putative tyrosine phosphatase 067L (Aedes vexans (Inland floodwater mosquito)).